A 149-amino-acid polypeptide reads, in one-letter code: 3-dehydroquinate dehydratase (149 aa).

Tyrosine 26 acts as the Proton acceptor in catalysis. Positions 77, 83, and 90 each coordinate substrate. Histidine 103 acts as the Proton donor in catalysis. Residues 104–105 and arginine 114 each bind substrate; that span reads LS.

This sequence belongs to the type-II 3-dehydroquinase family. Homododecamer.

The catalysed reaction is 3-dehydroquinate = 3-dehydroshikimate + H2O. It functions in the pathway metabolic intermediate biosynthesis; chorismate biosynthesis; chorismate from D-erythrose 4-phosphate and phosphoenolpyruvate: step 3/7. Functionally, catalyzes a trans-dehydration via an enolate intermediate. In Haemophilus influenzae (strain 86-028NP), this protein is 3-dehydroquinate dehydratase.